Consider the following 352-residue polypeptide: UPF0252 protein MJ1282 (352 aa).

This sequence belongs to the UPF0252 family.

In Methanocaldococcus jannaschii (strain ATCC 43067 / DSM 2661 / JAL-1 / JCM 10045 / NBRC 100440) (Methanococcus jannaschii), this protein is UPF0252 protein MJ1282.